The chain runs to 233 residues: 5'-methylthioadenosine/S-adenosylhomocysteine nucleosidase (233 aa).

The Proton acceptor role is filled by E12. Substrate contacts are provided by residues G78, I152, and 173–174 (ME). D197 serves as the catalytic Proton donor.

Belongs to the PNP/UDP phosphorylase family. MtnN subfamily. Homodimer.

It carries out the reaction S-adenosyl-L-homocysteine + H2O = S-(5-deoxy-D-ribos-5-yl)-L-homocysteine + adenine. It catalyses the reaction S-methyl-5'-thioadenosine + H2O = 5-(methylsulfanyl)-D-ribose + adenine. The enzyme catalyses 5'-deoxyadenosine + H2O = 5-deoxy-D-ribose + adenine. It participates in amino-acid biosynthesis; L-methionine biosynthesis via salvage pathway; S-methyl-5-thio-alpha-D-ribose 1-phosphate from S-methyl-5'-thioadenosine (hydrolase route): step 1/2. Its function is as follows. Catalyzes the irreversible cleavage of the glycosidic bond in both 5'-methylthioadenosine (MTA) and S-adenosylhomocysteine (SAH/AdoHcy) to adenine and the corresponding thioribose, 5'-methylthioribose and S-ribosylhomocysteine, respectively. Also cleaves 5'-deoxyadenosine, a toxic by-product of radical S-adenosylmethionine (SAM) enzymes, into 5-deoxyribose and adenine. Thus, is required for in vivo function of the radical SAM enzymes biotin synthase and lipoic acid synthase, that are inhibited by 5'-deoxyadenosine accumulation. The protein is 5'-methylthioadenosine/S-adenosylhomocysteine nucleosidase of Yersinia pestis bv. Antiqua (strain Antiqua).